A 204-amino-acid polypeptide reads, in one-letter code: Major capsid protein (204 aa).

Positions Met-1–Gly-12 are enriched in polar residues. Residues Met-1 to Asp-74 form a disordered region. Basic residues predominate over residues Ser-13 to Ala-26. The segment covering Ala-27–Ala-41 has biased composition (low complexity). Residues Arg-42–Thr-57 show a composition bias toward basic residues.

Belongs to the luteoviruses capsid protein family.

It localises to the virion. Major capsid protein. This chain is Major capsid protein, found in Avena byzantina (Oat).